The following is a 479-amino-acid chain: mRNA export factor ICP27 homolog (479 aa).

The segment covering M1 to S15 has biased composition (low complexity). Disordered stretches follow at residues M1 to V77 and K91 to W210. Positions T35–G44 are enriched in acidic residues. The tract at residues D61–H146 is nuclear export signal and interaction with host NXF1. The nuclear localization signal stretch occupies residues K127 to R130. Positions E132–G142 are enriched in basic and acidic residues. The interval K143–R145 is nuclear localization signal. Zn(2+)-binding residues include C354, H445, C449, and C454. A CHC2-type zinc finger spans residues C354–C454.

Belongs to the HHV-1 ICP27 protein family. As to quaternary structure, interacts with host XPO1 and with the XPO1 export pathway components small GTPase RAN and nucleoporin NUP214. Interacts with host SPEN, OTT1 and OTT3. Interacts with host SRSF1, SRSF3, SRSF7 and SRPK1. Interacts with host DHX9; this interaction may have an inhibitory effect on virion production. Interacts (via N-terminus) with host NXF1; this interaction plays a role in mRNA export. Post-translationally, phosphorylated by cellular protein kinase CK2.

It is found in the host nucleus. The protein localises to the host cytoplasm. In terms of biological role, promotes the nuclear export of a subset of early and late viral mRNAs by interacting with mRNAs and cellular export proteins. Additionally may prevent the establishment of cellular antiviral state, by acting as an alternative splicing factor for cellular RNAs such as STAT1, resulting in a STAT1 mRNA incapable of producing the STAT1alpha isoform. This Homo sapiens (Human) protein is mRNA export factor ICP27 homolog.